Reading from the N-terminus, the 293-residue chain is DNA repair protein RecO (293 aa).

The protein belongs to the RecO family.

Functionally, involved in DNA repair and RecF pathway recombination. In Acaryochloris marina (strain MBIC 11017), this protein is DNA repair protein RecO.